The primary structure comprises 342 residues: Trans-3-hydroxy-L-proline dehydratase (342 aa).

Residue serine 90 is the Proton acceptor of the active site. Residues 91–92 (GS), aspartate 251, and 256–257 (GT) contribute to the substrate site.

It belongs to the proline racemase family.

The enzyme catalyses trans-3-hydroxy-L-proline = 1-pyrroline-2-carboxylate + H2O. Its function is as follows. Catalyzes the dehydration of trans-3-hydroxy-L-proline (t3LHyp) to Delta(1)-pyrroline-2-carboxylate (Pyr2C). Is likely involved in a degradation pathway that converts t3LHyp to L-proline, which would allow P.denitrificans to grow on t3LHyp as a sole carbon source. Displays neither proline racemase activity nor 4-hydroxyproline 2-epimerase activity. The chain is Trans-3-hydroxy-L-proline dehydratase from Paracoccus denitrificans (strain Pd 1222).